The sequence spans 132 residues: Small ribosomal subunit protein uS8 (132 aa).

It belongs to the universal ribosomal protein uS8 family. Part of the 30S ribosomal subunit. Contacts proteins S5 and S12.

In terms of biological role, one of the primary rRNA binding proteins, it binds directly to 16S rRNA central domain where it helps coordinate assembly of the platform of the 30S subunit. This Treponema pallidum (strain Nichols) protein is Small ribosomal subunit protein uS8.